A 227-amino-acid polypeptide reads, in one-letter code: MVFDARDGADKLVIALPKGRILKEAMPLIEAAGLSPEPSFDDPDSRQLRFSTSDPRVDIIRVRSFDVATFVAFGAAHIGVAGNDVILEFNYPELYAPLDLGIGACRLSVAEAERFSAEDDPGRWSHIRVATKYPEITRRHFAARGVQAECIKLNGAMELAPALGLCRRIVDLVSSGATLKANGLVEVERILDVTSRLVVNRTAMKVRSREMTAWIERFREACDAVAA.

It belongs to the ATP phosphoribosyltransferase family. Short subfamily. As to quaternary structure, heteromultimer composed of HisG and HisZ subunits.

It localises to the cytoplasm. It carries out the reaction 1-(5-phospho-beta-D-ribosyl)-ATP + diphosphate = 5-phospho-alpha-D-ribose 1-diphosphate + ATP. The protein operates within amino-acid biosynthesis; L-histidine biosynthesis; L-histidine from 5-phospho-alpha-D-ribose 1-diphosphate: step 1/9. Its function is as follows. Catalyzes the condensation of ATP and 5-phosphoribose 1-diphosphate to form N'-(5'-phosphoribosyl)-ATP (PR-ATP). Has a crucial role in the pathway because the rate of histidine biosynthesis seems to be controlled primarily by regulation of HisG enzymatic activity. The protein is ATP phosphoribosyltransferase of Rhodospirillum rubrum (strain ATCC 11170 / ATH 1.1.1 / DSM 467 / LMG 4362 / NCIMB 8255 / S1).